Reading from the N-terminus, the 316-residue chain is Cytochrome c biogenesis protein CcsA (316 aa).

The next 8 membrane-spanning stretches (helical) occupy residues 9 to 29, 39 to 61, 70 to 90, 94 to 114, 143 to 163, 224 to 244, 257 to 271, and 289 to 309; these read IFVNISFVMFFFVTLLNLINL, FSKNSMTIAFFCTTGFLITRYLQ, LYESLMFLSWGFSLLYLILEV, IGLSHAVLAPGAMLIHAFATL, LISYITLLCGSLLAITLLSLF, TISLGFSLLTIGILSGAVWAN, ETWALVTWLVYAIYL, and SMGFFLVWICFLGVNLLGVGL.

This sequence belongs to the CcmF/CycK/Ccl1/NrfE/CcsA family. May interact with Ccs1.

It is found in the plastid. Its subcellular location is the chloroplast thylakoid membrane. Required during biogenesis of c-type cytochromes (cytochrome c6 and cytochrome f) at the step of heme attachment. In Adiantum capillus-veneris (Maidenhair fern), this protein is Cytochrome c biogenesis protein CcsA.